The chain runs to 391 residues: Formate-dependent phosphoribosylglycinamide formyltransferase (391 aa).

Residues 18 to 19 (EL) and Glu78 contribute to the N(1)-(5-phospho-beta-D-ribosyl)glycinamide site. Residues Arg110, Lys151, 156–161 (SSGKGQ), 191–194 (EEFI), and Glu199 contribute to the ATP site. In terms of domain architecture, ATP-grasp spans 115–305 (DLASKDLKIK…EFELHLRAFL (191 aa)). Mg(2+) contacts are provided by Glu264 and Glu276. N(1)-(5-phospho-beta-D-ribosyl)glycinamide-binding positions include Asp283, Lys353, and 360–361 (RR).

This sequence belongs to the PurK/PurT family. In terms of assembly, homodimer.

The enzyme catalyses N(1)-(5-phospho-beta-D-ribosyl)glycinamide + formate + ATP = N(2)-formyl-N(1)-(5-phospho-beta-D-ribosyl)glycinamide + ADP + phosphate + H(+). It functions in the pathway purine metabolism; IMP biosynthesis via de novo pathway; N(2)-formyl-N(1)-(5-phospho-D-ribosyl)glycinamide from N(1)-(5-phospho-D-ribosyl)glycinamide (formate route): step 1/1. In terms of biological role, involved in the de novo purine biosynthesis. Catalyzes the transfer of formate to 5-phospho-ribosyl-glycinamide (GAR), producing 5-phospho-ribosyl-N-formylglycinamide (FGAR). Formate is provided by PurU via hydrolysis of 10-formyl-tetrahydrofolate. This is Formate-dependent phosphoribosylglycinamide formyltransferase from Prochlorococcus marinus (strain AS9601).